The following is a 55-amino-acid chain: Large ribosomal subunit protein bL33 (55 aa).

This sequence belongs to the bacterial ribosomal protein bL33 family.

This Hamiltonella defensa subsp. Acyrthosiphon pisum (strain 5AT) protein is Large ribosomal subunit protein bL33.